Here is a 1331-residue protein sequence, read N- to C-terminus: Sodium-dependent transporter bedraggled (1331 aa).

The segment at 1–62 (MSSKEQQAAG…QLEHEQFGLS (62 aa)) is disordered. A compositionally biased stretch (polar residues) spans 16 to 25 (NSNAYSSLPP). Positions 28–43 (TGAGCSGAALGSGTGT) are enriched in gly residues. An N-linked (GlcNAc...) asparagine glycan is attached at asparagine 168. Disordered stretches follow at residues 221–284 (EPRT…TEPV) and 363–473 (QTNA…SASS). Residues 258-282 (KTFSCSLRPTSQIASSSGSLETSTE) show a composition bias toward polar residues. Over residues 369–383 (SSEEPRPRQYGRRLE) the composition is skewed to basic and acidic residues. The span at 413–436 (LQDTPTHPIMSTCSELSSARSSRM) shows a compositional bias: polar residues. Over residues 437 to 453 (PSPVSLPSDSSSSGSSS) the composition is skewed to low complexity. The span at 463 to 473 (VQTTTMCSASS) shows a compositional bias: polar residues. The next 3 helical transmembrane spans lie at 505–525 (LALI…VLTI), 531–551 (FLLQ…WLQM), and 567–587 (ISPI…FLAL). N-linked (GlcNAc...) asparagine glycosylation is found at asparagine 627 and asparagine 631. Helical transmembrane passes span 667-687 (QLAF…CKGL), 696-716 (IIYT…VYVV), 741-761 (TAAT…VIAI), and 778-798 (AILL…LALC). Asparagine 857 is a glycosylation site (N-linked (GlcNAc...) asparagine). Residues 890-910 (WVWAAVAFATFAGFGLAQLCV) traverse the membrane as a helical segment. N-linked (GlcNAc...) asparagine glycosylation occurs at asparagine 921. Transmembrane regions (helical) follow at residues 926 to 946 (VLLS…EMGI), 956 to 976 (LGGS…VFLI), 998 to 1018 (AFLA…LSVV), and 1044 to 1064 (MGSL…IIQI). 3 disordered regions span residues 1086–1136 (PEEG…SYTT), 1169–1238 (SLDA…ASTL), and 1256–1275 (VRHR…TLPR). Polar residues-rich tracts occupy residues 1097–1115 (ARQT…TTEG) and 1186–1196 (ILTNPAGSSFN). A compositionally biased stretch (low complexity) spans 1197 to 1209 (ADPSPASSSSPES).

The protein belongs to the sodium:neurotransmitter symporter (SNF) (TC 2.A.22) family.

The protein localises to the membrane. Its function is as follows. Putative sodium-dependent transporter which is required for viability, early imaginal disk development and adult motor coordination. Also has a role in the fate commitment of the R3/R4 photoreceptor cells. May function in ommatidial polarity by regulating the activity of the core polarity genes, acting upstream of (or in parallel to) Vang, dsh, pk, stan, and dgo, but downstream or independently of fz. The sequence is that of Sodium-dependent transporter bedraggled from Drosophila melanogaster (Fruit fly).